Here is a 134-residue protein sequence, read N- to C-terminus: Phospholipase A2 (134 aa).

Ca(2+) contacts are provided by Trp-8, Gly-10, and Gly-12. 5 disulfides stabilise this stretch: Cys-9–Cys-31, Cys-30–Cys-70, Cys-37–Cys-63, Cys-61–Cys-95, and Cys-105–Cys-113. N-linked (GlcNAc...) asparagine glycosylation occurs at Asn-13. Residue His-34 is part of the active site. Asp-35 is a Ca(2+) binding site. Residue Asp-64 is part of the active site.

The protein belongs to the phospholipase A2 family. Group III subfamily. Ca(2+) is required as a cofactor. As to expression, expressed by the venom gland.

Its subcellular location is the secreted. The enzyme catalyses a 1,2-diacyl-sn-glycero-3-phosphocholine + H2O = a 1-acyl-sn-glycero-3-phosphocholine + a fatty acid + H(+). In terms of biological role, PLA2 catalyzes the calcium-dependent hydrolysis of the 2-acyl groups in 3-sn-phosphoglycerides. The chain is Phospholipase A2 from Apis cerana cerana (Oriental honeybee).